Here is a 334-residue protein sequence, read N- to C-terminus: F420-dependent glucose-6-phosphate dehydrogenase (334 aa).

Asp-38 is a binding site for coenzyme F420-(gamma-Glu)n. The Proton donor role is filled by His-39. Residues Thr-75 and 106 to 107 (TG) each bind coenzyme F420-(gamma-Glu)n. Glu-108 serves as the catalytic Proton acceptor. Coenzyme F420-(gamma-Glu)n-binding positions include Asn-111, 175-176 (GG), and 178-179 (LV). The substrate site is built by Thr-193, Lys-196, Lys-257, and Arg-281.

Belongs to the F420-dependent glucose-6-phosphate dehydrogenase family. As to quaternary structure, homodimer.

The enzyme catalyses oxidized coenzyme F420-(gamma-L-Glu)(n) + D-glucose 6-phosphate + H(+) = 6-phospho-D-glucono-1,5-lactone + reduced coenzyme F420-(gamma-L-Glu)(n). Its function is as follows. Catalyzes the coenzyme F420-dependent oxidation of glucose 6-phosphate (G6P) to 6-phosphogluconolactone. The polypeptide is F420-dependent glucose-6-phosphate dehydrogenase (Kribbella flavida (strain DSM 17836 / JCM 10339 / NBRC 14399)).